The sequence spans 121 residues: Large ribosomal subunit protein uL22 (121 aa).

The protein belongs to the universal ribosomal protein uL22 family. Part of the 50S ribosomal subunit.

Its function is as follows. This protein binds specifically to 23S rRNA; its binding is stimulated by other ribosomal proteins, e.g. L4, L17, and L20. It is important during the early stages of 50S assembly. It makes multiple contacts with different domains of the 23S rRNA in the assembled 50S subunit and ribosome. The globular domain of the protein is located near the polypeptide exit tunnel on the outside of the subunit, while an extended beta-hairpin is found that lines the wall of the exit tunnel in the center of the 70S ribosome. This is Large ribosomal subunit protein uL22 from Synechococcus sp. (strain WH7803).